We begin with the raw amino-acid sequence, 99 residues long: METLSFEFPAGQPARQRAQVGCVGSGDLEVLLEPGPAGRLNIQVVTSVNGSAERWRHLFERMFAGAEPPALNVDIHDFGATPGVVRLRLEQALEEVSNV.

An O-(phosphoribosyl dephospho-coenzyme A)serine modification is found at serine 25.

Belongs to the MdcC family. Post-translationally, covalently binds the prosthetic group of malonate decarboxylase.

The protein localises to the cytoplasm. In terms of biological role, subunit of malonate decarboxylase, it is an acyl carrier protein to which acetyl and malonyl thioester residues are bound via a 2'-(5''-phosphoribosyl)-3'-dephospho-CoA prosthetic group and turn over during the catalytic mechanism. The protein is Malonate decarboxylase acyl carrier protein of Azotobacter vinelandii (strain DJ / ATCC BAA-1303).